Reading from the N-terminus, the 63-residue chain is MKASELREKSVEELNAELLGLLREQFNLRMQHATGQLTQTHQLKLVRRNIARVKTIITSKAGA.

The protein belongs to the universal ribosomal protein uL29 family.

This is Large ribosomal subunit protein uL29 from Shewanella oneidensis (strain ATCC 700550 / JCM 31522 / CIP 106686 / LMG 19005 / NCIMB 14063 / MR-1).